The following is a 432-amino-acid chain: Aspartate aminotransferase (432 aa).

Substrate is bound at residue 45–46 (RG). A pyridoxal 5'-phosphate-binding site is contributed by 109–111 (SSL). A substrate-binding site is contributed by 148–150 (YDR). Pyridoxal 5'-phosphate-binding positions include Asn-197, Tyr-229, and 262–265 (STSK). Arg-400 serves as a coordination point for substrate.

This sequence belongs to the class-I pyridoxal-phosphate-dependent aminotransferase family. Homodimer. Pyridoxal 5'-phosphate is required as a cofactor.

It catalyses the reaction L-aspartate + 2-oxoglutarate = oxaloacetate + L-glutamate. This is Aspartate aminotransferase from Corynebacterium glutamicum (strain ATCC 13032 / DSM 20300 / JCM 1318 / BCRC 11384 / CCUG 27702 / LMG 3730 / NBRC 12168 / NCIMB 10025 / NRRL B-2784 / 534).